Here is a 374-residue protein sequence, read N- to C-terminus: Alcohol dehydrogenase 1 (374 aa).

Residue Ser1 is modified to N-acetylserine. Residues Cys46, His67, Cys97, Cys100, Cys103, Cys111, and Cys174 each coordinate Zn(2+). NAD(+) contacts are provided by residues Gly199–Gly204, Asp223, Lys228, Val292–Val294, and Arg369.

The protein belongs to the zinc-containing alcohol dehydrogenase family. Class-I subfamily. Zn(2+) is required as a cofactor.

The protein localises to the cytoplasm. The enzyme catalyses a primary alcohol + NAD(+) = an aldehyde + NADH + H(+). It catalyses the reaction a secondary alcohol + NAD(+) = a ketone + NADH + H(+). This chain is Alcohol dehydrogenase 1, found in Alligator mississippiensis (American alligator).